The chain runs to 199 residues: MIKLIVGLGNPGAEYTATRHNAGFWLIDQLAREAGTTLRDERRFHGFYAKARLHGEEVHLLEPQTYMNRSGQSVVALAQFFKILPDQILVAHDELDLPPGTVKLKLGGGSGGHNGLKDITAHLSSQQYWRLRIGIGHPRDLIPESARAGAKPDVANFVLKPPRREEQDVIDASIERALAVMPMVVKGELDRATMQLHRN.

Tyr-15 contributes to the tRNA binding site. Residue His-20 is the Proton acceptor of the active site. Tyr-66, Asn-68, and Asn-114 together coordinate tRNA.

It belongs to the PTH family. Monomer.

It is found in the cytoplasm. It carries out the reaction an N-acyl-L-alpha-aminoacyl-tRNA + H2O = an N-acyl-L-amino acid + a tRNA + H(+). Hydrolyzes ribosome-free peptidyl-tRNAs (with 1 or more amino acids incorporated), which drop off the ribosome during protein synthesis, or as a result of ribosome stalling. In terms of biological role, catalyzes the release of premature peptidyl moieties from peptidyl-tRNA molecules trapped in stalled 50S ribosomal subunits, and thus maintains levels of free tRNAs and 50S ribosomes. This is Peptidyl-tRNA hydrolase from Burkholderia cenocepacia (strain ATCC BAA-245 / DSM 16553 / LMG 16656 / NCTC 13227 / J2315 / CF5610) (Burkholderia cepacia (strain J2315)).